The sequence spans 219 residues: Interleukin-12 subunit alpha (219 aa).

The signal sequence occupies residues 1 to 22 (MCPARSLLLVATLVLLDHLSLA). 3 disulfides stabilise this stretch: cysteine 37–cysteine 110, cysteine 64–cysteine 196, and cysteine 85–cysteine 123. 2 N-linked (GlcNAc...) asparagine glycosylation sites follow: asparagine 93 and asparagine 107.

This sequence belongs to the IL-6 superfamily. Heterodimer with IL12B; disulfide-linked. This heterodimer is known as interleukin IL-12. Heterodimer with EBI3/IL27B; not disulfide-linked. This heterodimer is known as interleukin IL-35. Interacts with NBR1; this interaction promotes IL-12 secretion.

It localises to the secreted. Functionally, heterodimerizes with IL12B to form the IL-12 cytokine or with EBI3/IL27B to form the IL-35 cytokine. IL-12 is primarily produced by professional antigen-presenting cells (APCs) such as B-cells and dendritic cells (DCs) as well as macrophages and granulocytes and regulates T-cell and natural killer-cell responses, induces the production of interferon-gamma (IFN-gamma), favors the differentiation of T-helper 1 (Th1) cells and is an important link between innate resistance and adaptive immunity. Mechanistically, exerts its biological effects through a receptor composed of IL12R1 and IL12R2 subunits. Binding to the receptor results in the rapid tyrosine phosphorylation of a number of cellular substrates including the JAK family kinases TYK2 and JAK2. In turn, recruited STAT4 gets phosphorylated and translocates to the nucleus where it regulates cytokine/growth factor responsive genes. As part of IL-35, plays essential roles in maintaining the immune homeostasis of the liver microenvironment and also functions as an immune-suppressive cytokine. Mediates biological events through unconventional receptors composed of IL12RB2 and gp130/IL6ST heterodimers or homodimers. Signaling requires the transcription factors STAT1 and STAT4, which form a unique heterodimer that binds to distinct DNA sites. This Homo sapiens (Human) protein is Interleukin-12 subunit alpha (IL12A).